We begin with the raw amino-acid sequence, 250 residues long: Ubiquinone/menaquinone biosynthesis C-methyltransferase UbiE (250 aa).

Residues Ser73, Asp94, and 122–123 (NA) each bind S-adenosyl-L-methionine.

This sequence belongs to the class I-like SAM-binding methyltransferase superfamily. MenG/UbiE family.

The enzyme catalyses a 2-demethylmenaquinol + S-adenosyl-L-methionine = a menaquinol + S-adenosyl-L-homocysteine + H(+). It catalyses the reaction a 2-methoxy-6-(all-trans-polyprenyl)benzene-1,4-diol + S-adenosyl-L-methionine = a 5-methoxy-2-methyl-3-(all-trans-polyprenyl)benzene-1,4-diol + S-adenosyl-L-homocysteine + H(+). Its pathway is quinol/quinone metabolism; menaquinone biosynthesis; menaquinol from 1,4-dihydroxy-2-naphthoate: step 2/2. It participates in cofactor biosynthesis; ubiquinone biosynthesis. Methyltransferase required for the conversion of demethylmenaquinol (DMKH2) to menaquinol (MKH2) and the conversion of 2-polyprenyl-6-methoxy-1,4-benzoquinol (DDMQH2) to 2-polyprenyl-3-methyl-6-methoxy-1,4-benzoquinol (DMQH2). The sequence is that of Ubiquinone/menaquinone biosynthesis C-methyltransferase UbiE from Legionella pneumophila (strain Paris).